Here is a 206-residue protein sequence, read N- to C-terminus: Large ribosomal subunit protein uL4 (206 aa).

A disordered region spans residues 63–94 (MYKQKGTGRARHHSARAPQFRGGGKAHGPVVR). Over residues 64–77 (YKQKGTGRARHHSA) the composition is skewed to basic residues.

It belongs to the universal ribosomal protein uL4 family. As to quaternary structure, part of the 50S ribosomal subunit.

One of the primary rRNA binding proteins, this protein initially binds near the 5'-end of the 23S rRNA. It is important during the early stages of 50S assembly. It makes multiple contacts with different domains of the 23S rRNA in the assembled 50S subunit and ribosome. Functionally, forms part of the polypeptide exit tunnel. The protein is Large ribosomal subunit protein uL4 of Mesorhizobium japonicum (strain LMG 29417 / CECT 9101 / MAFF 303099) (Mesorhizobium loti (strain MAFF 303099)).